The chain runs to 642 residues: Polyglycine hydrolase (642 aa).

The first 23 residues, methionine 1–serine 23, serve as a signal peptide directing secretion. 4 N-linked (GlcNAc...) asparagine glycosylation sites follow: asparagine 37, asparagine 100, asparagine 159, and asparagine 341. The cysteines at positions 149 and 183 are disulfide-linked. The active site involves serine 370. 5 N-linked (GlcNAc...) asparagine glycosylation sites follow: asparagine 390, asparagine 407, asparagine 444, asparagine 487, and asparagine 494.

The protein belongs to the peptidase S12 family.

The protein localises to the secreted. The enzyme catalyses a glycyl-glycyl-[protein] + H2O = N-terminal glycyl-[protein] + [protein]-C-terminal glycine. Not inhibited by phenylmethylsulfonyl fluoride (PMSF; serine peptidase class S1 inhibitor), clavulanic acid (beta-lactamase inhibitor) or ampicillin (penicillin-binding protein (PBP) inhibitor). Serine-type endopeptidase that cleaves Gly-Gly bonds in the polyglycine linker of host plant class IV chitinases to disrupt their chitin-binding, and thereby plays a role in lowering the defense responses of the host to the fungus. Degrades Z.mays Endochitinase A (CHIA). Degrades Z.mays Endochitinase B (CHIB). Has no activity on Z.mays CHIA following CHIA cleavage by fungalysin. This Epicoccum sorghinum (Endophyte fungus) protein is Polyglycine hydrolase.